Consider the following 83-residue polypeptide: Small ribosomal subunit protein uS17 (83 aa).

This sequence belongs to the universal ribosomal protein uS17 family. Part of the 30S ribosomal subunit.

Functionally, one of the primary rRNA binding proteins, it binds specifically to the 5'-end of 16S ribosomal RNA. This is Small ribosomal subunit protein uS17 from Nitratiruptor sp. (strain SB155-2).